Reading from the N-terminus, the 610-residue chain is Glucoamylase ARB_02327-1 (610 aa).

An N-terminal signal peptide occupies residues 1 to 18; the sequence is MRVTSLLWSSLVIPAAVG. Residues 19–24 constitute a propeptide that is removed on maturation; that stretch reads FQVRFK. Asparagine 49 carries an N-linked (GlcNAc...) asparagine glycan. Residue tryptophan 143 participates in substrate binding. The N-linked (GlcNAc...) asparagine glycan is linked to asparagine 194. The Proton acceptor role is filled by aspartate 199. The active-site Proton donor is glutamate 202. Cystine bridges form between cysteine 233/cysteine 236, cysteine 245/cysteine 472, and cysteine 285/cysteine 293. The region spanning 504 to 610 is the CBM20 domain; the sequence is TALPTKNNVR…SGAIKRDTWR (107 aa).

This sequence belongs to the glycosyl hydrolase 15 family.

Its subcellular location is the secreted. The enzyme catalyses Hydrolysis of terminal (1-&gt;4)-linked alpha-D-glucose residues successively from non-reducing ends of the chains with release of beta-D-glucose.. The protein is Glucoamylase ARB_02327-1 of Arthroderma benhamiae (strain ATCC MYA-4681 / CBS 112371) (Trichophyton mentagrophytes).